The primary structure comprises 293 residues: Ribosomal protein L11 methyltransferase (293 aa).

S-adenosyl-L-methionine is bound by residues threonine 145, glycine 166, aspartate 188, and asparagine 230.

This sequence belongs to the methyltransferase superfamily. PrmA family.

The protein localises to the cytoplasm. It carries out the reaction L-lysyl-[protein] + 3 S-adenosyl-L-methionine = N(6),N(6),N(6)-trimethyl-L-lysyl-[protein] + 3 S-adenosyl-L-homocysteine + 3 H(+). Its function is as follows. Methylates ribosomal protein L11. This chain is Ribosomal protein L11 methyltransferase, found in Escherichia coli (strain SMS-3-5 / SECEC).